Consider the following 244-residue polypeptide: Proteasome subunit alpha type-5 (244 aa).

It belongs to the peptidase T1A family. In terms of assembly, the 26S proteasome consists of a 20S proteasome core and two 19S regulatory subunits. The 20S proteasome core is composed of 28 subunits that are arranged in four stacked rings, resulting in a barrel-shaped structure. The two end rings are each formed by seven alpha subunits, and the two central rings are each formed by seven beta subunits. The catalytic chamber with the active sites is on the inside of the barrel.

It localises to the cytoplasm. The protein localises to the nucleus. Functionally, the proteasome is a multicatalytic proteinase complex which is characterized by its ability to cleave peptides with Arg, Phe, Tyr, Leu, and Glu adjacent to the leaving group at neutral or slightly basic pH. The proteasome has an ATP-dependent proteolytic activity. The protein is Proteasome subunit alpha type-5 (Prosalpha5) of Drosophila melanogaster (Fruit fly).